Reading from the N-terminus, the 91-residue chain is Acyl carrier protein (91 aa).

The Carrier domain occupies 4-79; that stretch reads QQILDKVQSI…QAVDYILQHK (76 aa). An O-(pantetheine 4'-phosphoryl)serine modification is found at Ser39.

Belongs to the acyl carrier protein (ACP) family. 4'-phosphopantetheine is transferred from CoA to a specific serine of apo-ACP by AcpS. This modification is essential for activity because fatty acids are bound in thioester linkage to the sulfhydryl of the prosthetic group.

It is found in the plastid. Its subcellular location is the chloroplast. It participates in lipid metabolism; fatty acid biosynthesis. Its function is as follows. Carrier of the growing fatty acid chain in fatty acid biosynthesis. This Cyanidioschyzon merolae (strain NIES-3377 / 10D) (Unicellular red alga) protein is Acyl carrier protein.